A 212-amino-acid chain; its full sequence is External core antigen (212 aa).

Residues 1-19 form the signal peptide; it reads MQLFHLCLIISCSCPTVQA. The segment at 25–27 is HBEAG; that stretch reads GWL. Positions 165–212 are disordered; sequence NAPILSTLPETTVVRRRGRSPRRRTPSPRRRRSQSPRRRRSQSRESQC. The span at 178–205 shows a compositional bias: basic residues; the sequence is VRRRGRSPRRRTPSPRRRRSQSPRRRRS. A 1; half-length repeat occupies 184-190; that stretch reads SPRRRTP. Positions 184–206 are 3 X 8 AA repeats of S-P-R-R-R-R-S-Q; it reads SPRRRTPSPRRRRSQSPRRRRSQ. Positions 184 to 212 are excised as a propeptide; that stretch reads SPRRRTPSPRRRRSQSPRRRRSQSRESQC. 2 consecutive repeat copies span residues 191 to 198 and 199 to 206.

This sequence belongs to the orthohepadnavirus precore antigen family. In terms of assembly, homodimerizes. Post-translationally, phosphorylated. Cleaved by host furin.

It is found in the secreted. The protein localises to the host nucleus. Its function is as follows. May regulate immune response to the intracellular capsid in acting as a T-cell tolerogen, by having an immunoregulatory effect which prevents destruction of infected cells by cytotoxic T-cells. This immune regulation may predispose to chronicity during perinatal infections and prevent severe liver injury during adult infections. The chain is External core antigen from Homo sapiens (Human).